An 884-amino-acid chain; its full sequence is DNA mismatch repair protein MutS (884 aa).

643 to 650 (GPNMGGKS) contacts ATP.

It belongs to the DNA mismatch repair MutS family.

In terms of biological role, this protein is involved in the repair of mismatches in DNA. It is possible that it carries out the mismatch recognition step. This protein has a weak ATPase activity. The polypeptide is DNA mismatch repair protein MutS (Methylobacillus flagellatus (strain ATCC 51484 / DSM 6875 / VKM B-1610 / KT)).